We begin with the raw amino-acid sequence, 271 residues long: Pyrroline-5-carboxylate reductase (271 aa).

The protein belongs to the pyrroline-5-carboxylate reductase family.

It is found in the cytoplasm. It catalyses the reaction L-proline + NADP(+) = (S)-1-pyrroline-5-carboxylate + NADPH + 2 H(+). The enzyme catalyses L-proline + NAD(+) = (S)-1-pyrroline-5-carboxylate + NADH + 2 H(+). It participates in amino-acid biosynthesis; L-proline biosynthesis; L-proline from L-glutamate 5-semialdehyde: step 1/1. Catalyzes the reduction of 1-pyrroline-5-carboxylate (PCA) to L-proline. The protein is Pyrroline-5-carboxylate reductase of Staphylococcus saprophyticus subsp. saprophyticus (strain ATCC 15305 / DSM 20229 / NCIMB 8711 / NCTC 7292 / S-41).